A 427-amino-acid chain; its full sequence is Pseudouridylate synthase 1 homolog (427 aa).

Residues 20 to 83 (GPRPSCSPRM…DEERREKPPK (64 aa)) are disordered. Basic and acidic residues predominate over residues 44–79 (QDRRSCSGRAGGDRVWEDGEHPAKKLKSGGDEERRE). Aspartate 146 serves as the catalytic Nucleophile. The tract at residues 407-427 (GGTGAKVPSPLEGSEGDGDTD) is disordered. 2 positions are modified to phosphoserine: serine 415 and serine 420. Phosphothreonine is present on threonine 426.

This sequence belongs to the tRNA pseudouridine synthase TruA family. As to quaternary structure, monomer. Forms a complex with RARG and the SRA1 RNA in the nucleus. In terms of tissue distribution, widely expressed. High levels of expression found in brain and skeletal muscle.

It localises to the mitochondrion. Its subcellular location is the nucleus. The protein localises to the cytoplasm. The catalysed reaction is a uridine in tRNA = a pseudouridine in tRNA. It catalyses the reaction uridine(38/39/40) in tRNA = pseudouridine(38/39/40) in tRNA. The enzyme catalyses a uridine in mRNA = a pseudouridine in mRNA. In terms of biological role, pseudouridylate synthase that catalyzes pseudouridylation of tRNAs and mRNAs. Acts on positions 27/28 in the anticodon stem and also positions 34 and 36 in the anticodon of an intron containing tRNA. Also catalyzes pseudouridylation of mRNAs: mediates pseudouridylation of mRNAs with the consensus sequence 5'-UGUAG-3'. Acts as a regulator of pre-mRNA splicing by mediating pseudouridylation of pre-mRNAs at locations associated with alternatively spliced regions. Pseudouridylation of pre-mRNAs near splice sites directly regulates mRNA splicing and mRNA 3'-end processing. Involved in regulation of nuclear receptor activity through pseudouridylation of SRA1 mRNA. The sequence is that of Pseudouridylate synthase 1 homolog from Homo sapiens (Human).